A 215-amino-acid polypeptide reads, in one-letter code: Putative B3 domain-containing protein Os11g0625400 (215 aa).

Residues 1–51 constitute a DNA-binding region (TF-B3 1); it reads MTVELEKIAGSFFISKGWKTFVHRTGLLSGQYIRFQVLTPSKINVLLFDKK. Residues 92–117 are disordered; that stretch reads SHTSNKETSSDSRTESMTDIPSSSDN. Over residues 95 to 107 the composition is skewed to basic and acidic residues; it reads SNKETSSDSRTES. Positions 108 to 117 are enriched in polar residues; sequence MTDIPSSSDN. The TF-B3 2 DNA-binding region spans 123 to 215; that stretch reads DIKNYISIIG…PNVKITIDVL (93 aa).

The protein localises to the nucleus. The sequence is that of Putative B3 domain-containing protein Os11g0625400 from Oryza sativa subsp. japonica (Rice).